The sequence spans 195 residues: A-type ATP synthase subunit E (195 aa).

It belongs to the V-ATPase E subunit family. As to quaternary structure, has multiple subunits with at least A(3), B(3), C, D, E, F, H, I and proteolipid K(x).

It localises to the cell membrane. Its function is as follows. Component of the A-type ATP synthase that produces ATP from ADP in the presence of a proton gradient across the membrane. The protein is A-type ATP synthase subunit E of Staphylothermus marinus (strain ATCC 43588 / DSM 3639 / JCM 9404 / F1).